Reading from the N-terminus, the 105-residue chain is MTMMITTGNSFEGKVIKQYLGIVRGIVVRSPTISQGLMGGLKSIVGGKIGAYSEMCEHAREEAFQLMIEHAQALNANGIIAMRYDTGEIGQAGTEVLCYGTAVII.

Belongs to the UPF0145 family.

This is UPF0145 protein lpg0197 from Legionella pneumophila subsp. pneumophila (strain Philadelphia 1 / ATCC 33152 / DSM 7513).